The primary structure comprises 417 residues: Serine--tRNA ligase (417 aa).

225–227 provides a ligand contact to L-serine; that stretch reads TLE. 256–258 lines the ATP pocket; that stretch reads RQE. An L-serine-binding site is contributed by Glu-279. ATP is bound at residue 343-346; it reads EVSS. Thr-379 is an L-serine binding site.

The protein belongs to the class-II aminoacyl-tRNA synthetase family. Type-1 seryl-tRNA synthetase subfamily. In terms of assembly, homodimer. The tRNA molecule binds across the dimer.

The protein localises to the cytoplasm. It catalyses the reaction tRNA(Ser) + L-serine + ATP = L-seryl-tRNA(Ser) + AMP + diphosphate + H(+). The enzyme catalyses tRNA(Sec) + L-serine + ATP = L-seryl-tRNA(Sec) + AMP + diphosphate + H(+). The protein operates within aminoacyl-tRNA biosynthesis; selenocysteinyl-tRNA(Sec) biosynthesis; L-seryl-tRNA(Sec) from L-serine and tRNA(Sec): step 1/1. Functionally, catalyzes the attachment of serine to tRNA(Ser). Is also able to aminoacylate tRNA(Sec) with serine, to form the misacylated tRNA L-seryl-tRNA(Sec), which will be further converted into selenocysteinyl-tRNA(Sec). The polypeptide is Serine--tRNA ligase (Mycoplasma genitalium (strain ATCC 33530 / DSM 19775 / NCTC 10195 / G37) (Mycoplasmoides genitalium)).